We begin with the raw amino-acid sequence, 386 residues long: Succinate--CoA ligase [ADP-forming] subunit beta (386 aa).

The ATP-grasp domain occupies Lys9–Arg244. Residues Lys46, Gly53 to Gly55, Glu99, Cys102, and Glu107 each bind ATP. Positions 199 and 213 each coordinate Mg(2+). Residues Asn264 and Gly321–Met323 each bind substrate.

The protein belongs to the succinate/malate CoA ligase beta subunit family. In terms of assembly, heterotetramer of two alpha and two beta subunits. It depends on Mg(2+) as a cofactor.

The enzyme catalyses succinate + ATP + CoA = succinyl-CoA + ADP + phosphate. It catalyses the reaction GTP + succinate + CoA = succinyl-CoA + GDP + phosphate. Its pathway is carbohydrate metabolism; tricarboxylic acid cycle; succinate from succinyl-CoA (ligase route): step 1/1. In terms of biological role, succinyl-CoA synthetase functions in the citric acid cycle (TCA), coupling the hydrolysis of succinyl-CoA to the synthesis of either ATP or GTP and thus represents the only step of substrate-level phosphorylation in the TCA. The beta subunit provides nucleotide specificity of the enzyme and binds the substrate succinate, while the binding sites for coenzyme A and phosphate are found in the alpha subunit. This Rickettsia rickettsii (strain Iowa) protein is Succinate--CoA ligase [ADP-forming] subunit beta.